The following is a 1173-amino-acid chain: DNA-directed RNA polymerase subunit beta (1173 aa).

This sequence belongs to the RNA polymerase beta chain family. In terms of assembly, the RNAP catalytic core consists of 2 alpha, 1 beta, 1 beta' and 1 omega subunit. When a sigma factor is associated with the core the holoenzyme is formed, which can initiate transcription.

It catalyses the reaction RNA(n) + a ribonucleoside 5'-triphosphate = RNA(n+1) + diphosphate. In terms of biological role, DNA-dependent RNA polymerase catalyzes the transcription of DNA into RNA using the four ribonucleoside triphosphates as substrates. The chain is DNA-directed RNA polymerase subunit beta from Kosmotoga olearia (strain ATCC BAA-1733 / DSM 21960 / TBF 19.5.1).